Consider the following 264-residue polypeptide: Transcription initiation factor TFIID subunit 9 (264 aa).

Lysine 5 is modified (N6-acetyllysine). Phosphoserine occurs at positions 149, 152, 155, and 158. Positions 150 to 174 (VGSVSSRPSTPTLGTPTPQAMSVST) are disordered. A compositionally biased stretch (polar residues) spans 151–174 (GSVSSRPSTPTLGTPTPQAMSVST). Phosphothreonine occurs at positions 159, 161, 164, and 178. Serine 181 and serine 196 each carry phosphoserine. Positions 233 to 264 (QNTANESANALKRKREEEDDDDDDDDDDYDNL) are disordered. Residues 249-264 (EEDDDDDDDDDDYDNL) show a composition bias toward acidic residues.

It belongs to the TAF9 family. As to quaternary structure, component of the TFIID basal transcription factor complex, composed of TATA-box-binding protein TBP, and a number of TBP-associated factors (TAFs), including TAF1, TAF2, TAF3, TAF4, TAF5, TAF6, TAF7, TAF8, TAF9, TAF10, TAF11, TAF12 and TAF13. Component of the TATA-binding protein-free TAF complex (TFTC), the PCAF histone acetylase complex and the STAGA transcription coactivator-HAT complex. The PCAF complex consists at least of TADA2L/ADA2, SUPT3H/SPT3, TADA3L/ADA3, TAF5L/PAF65-beta, TAF6L/PAF65-alpha, TAF10/TAFII30, TAF12/TAFII20, TAF9/TAFII31 and TRRAP. The STAGA transcription coactivator-HAT complex consists at least of SUPT3H, GCN5L2, SUPT7L, TAF5L, TAF6L, TADA3L, TAD1L, TAF10, TAF12, TRRAP and TAF9. Binds N-terminal domain of p53/TP53 which is essential for transcription. Component of some MLL1/MLL complex, at least composed of the core components KMT2A/MLL1, ASH2L, HCFC1/HCF1, WDR5 and RBBP5, as well as the facultative components BACC1, CHD8, E2F6, HSP70, INO80C, KANSL1, LAS1L, MAX, MCRS1, MGA, MYST1/MOF, PELP1, PHF20, PRP31, RING2, RUVB1/TIP49A, RUVB2/TIP49B, SENP3, TAF1, TAF4, TAF6, TAF7, TAF9 and TEX10. Binds TFIIB and the Herpes simplex virus activator VP16. Forms a heterodimer with TAF6 in a complex with the TAF4B-TAF12 heterodimer. Also interacts with TAF5. Binds directly DNA. Increased DNA binding when complexed with TAF6.

It is found in the nucleus. In terms of biological role, the TFIID basal transcription factor complex plays a major role in the initiation of RNA polymerase II (Pol II)-dependent transcription. TFIID recognizes and binds promoters with or without a TATA box via its subunit TBP, a TATA-box-binding protein, and promotes assembly of the pre-initiation complex (PIC). The TFIID complex consists of TBP and TBP-associated factors (TAFs), including TAF1, TAF2, TAF3, TAF4, TAF5, TAF6, TAF7, TAF8, TAF9, TAF10, TAF11, TAF12 and TAF13. TAF9 is also a component of the TBP-free TAFII complex (TFTC), the PCAF histone acetylase complex and the STAGA transcription coactivator-HAT complex. TAF9 and its paralog TAF9B are involved in transcriptional activation as well as repression of distinct but overlapping sets of genes. Essential for cell viability. May have a role in gene regulation associated with apoptosis. The chain is Transcription initiation factor TFIID subunit 9 from Rattus norvegicus (Rat).